The following is a 497-amino-acid chain: Serine hydroxymethyltransferase (497 aa).

(6S)-5,6,7,8-tetrahydrofolate is bound by residues L176 and 180–182; that span reads GHL. Position 289 is an N6-(pyridoxal phosphate)lysine (K289).

It belongs to the SHMT family. In terms of assembly, homodimer. Pyridoxal 5'-phosphate is required as a cofactor.

It is found in the cytoplasm. It carries out the reaction (6R)-5,10-methylene-5,6,7,8-tetrahydrofolate + glycine + H2O = (6S)-5,6,7,8-tetrahydrofolate + L-serine. The protein operates within one-carbon metabolism; tetrahydrofolate interconversion. Its pathway is amino-acid biosynthesis; glycine biosynthesis; glycine from L-serine: step 1/1. In terms of biological role, catalyzes the reversible interconversion of serine and glycine with tetrahydrofolate (THF) serving as the one-carbon carrier. This reaction serves as the major source of one-carbon groups required for the biosynthesis of purines, thymidylate, methionine, and other important biomolecules. Also exhibits THF-independent aldolase activity toward beta-hydroxyamino acids, producing glycine and aldehydes, via a retro-aldol mechanism. This chain is Serine hydroxymethyltransferase, found in Chlamydia muridarum (strain MoPn / Nigg).